The following is a 69-amino-acid chain: Protein SlyX homolog (69 aa).

This sequence belongs to the SlyX family.

In Pseudomonas aeruginosa (strain LESB58), this protein is Protein SlyX homolog.